The chain runs to 555 residues: Glypican-6 (555 aa).

Positions 1 to 23 (MPSWIGAVILPLLGLLLSLPAGA) are cleaved as a signal peptide. The segment covering 348–357 (PALRSARSAP) has biased composition (low complexity). 2 disordered regions span residues 348-376 (PALR…PTTA) and 480-501 (GNDV…GSGC). Ser-529 carries GPI-anchor amidated serine lipidation. Positions 530–555 (SAAQRGHSLLSWSLTCIVLALQRLCR) are cleaved as a propeptide — removed in mature form.

The protein belongs to the glypican family. Widely expressed. High expression in fetal kidney and lung and lower expressions in fetal liver and brain. In adult tissues, very abundant in ovary, high levels also observed in liver, kidney, small intestine and colon. Not detected in peripheral blood leukocytes. Detected in breast cancer cells (at protein level).

The protein resides in the cell membrane. The protein localises to the secreted. Its subcellular location is the extracellular space. Cell surface proteoglycan that bears heparan sulfate. Putative cell surface coreceptor for growth factors, extracellular matrix proteins, proteases and anti-proteases. Enhances migration and invasion of cancer cells through WNT5A signaling. The polypeptide is Glypican-6 (GPC6) (Homo sapiens (Human)).